Reading from the N-terminus, the 275-residue chain is 2,3,4,5-tetrahydropyridine-2,6-dicarboxylate N-succinyltransferase (275 aa).

Positions 105 and 142 each coordinate substrate.

This sequence belongs to the transferase hexapeptide repeat family. Homotrimer.

It localises to the cytoplasm. The catalysed reaction is (S)-2,3,4,5-tetrahydrodipicolinate + succinyl-CoA + H2O = (S)-2-succinylamino-6-oxoheptanedioate + CoA. It functions in the pathway amino-acid biosynthesis; L-lysine biosynthesis via DAP pathway; LL-2,6-diaminopimelate from (S)-tetrahydrodipicolinate (succinylase route): step 1/3. This is 2,3,4,5-tetrahydropyridine-2,6-dicarboxylate N-succinyltransferase from Pectobacterium atrosepticum (strain SCRI 1043 / ATCC BAA-672) (Erwinia carotovora subsp. atroseptica).